A 521-amino-acid chain; its full sequence is Probable inorganic phosphate transporter 1-3 (521 aa).

Topologically, residues 1 to 24 are cytoplasmic; it reads MADQQLGVLKALDVAKTQLYHFTA. A helical transmembrane segment spans residues 25–45; that stretch reads IVIAGMGFFTDAYDLFCVSLV. Residues 46–70 lie on the Extracellular side of the membrane; that stretch reads TKLLGRLYYFNPTSAKPGSLPPHVA. A helical transmembrane segment spans residues 71–91; the sequence is AAVNGVALCGTLAGQLFFGWL. Over 92–99 the chain is Cytoplasmic; it reads GDKLGRKK. Residues 100 to 120 form a helical membrane-spanning segment; sequence VYGITLIMMILCSVASGLSLG. Residues 121 to 131 are Extracellular-facing; it reads NSAKGVMTTLC. A helical membrane pass occupies residues 132–152; sequence FFRFWLGFGIGGDYPLSATIM. Topologically, residues 153 to 161 are cytoplasmic; sequence SEYANKKTR. A helical transmembrane segment spans residues 162-182; the sequence is GAFIAAVFAMQGVGILAGGFV. Topologically, residues 183–211 are extracellular; that stretch reads ALAVSSIFDKKFPSPTYEQDRFLSTPPQA. A helical membrane pass occupies residues 212–232; the sequence is DYIWRIIVMFGALPAALTYYW. Residues 233–292 are Cytoplasmic-facing; that stretch reads RMKMPETARYTALVAKNIKQATADMSKVLQTDLELEERVEDDVKDPKKNYGLFSKEFLRR. A helical membrane pass occupies residues 293-313; the sequence is HGLHLLGTTSTWFLLDIAFYS. At 314–348 the chain is on the extracellular side; the sequence is QNLFQKDIFSAIGWIPKAATMNAIHEVFKIARAQT. The chain crosses the membrane as a helical span at residues 349 to 369; the sequence is LIALCSTVPGYWFTVAFIDII. Topologically, residues 370 to 371 are cytoplasmic; that stretch reads GR. The chain crosses the membrane as a helical span at residues 372–392; it reads FAIQLMGFFMMTVFMFAIAFP. The Extracellular portion of the chain corresponds to 393–402; sequence YNHWILPDNR. The helical transmembrane segment at 403 to 423 threads the bilayer; it reads IGFVVMYSLTFFFANFGPNAT. Residues 424 to 441 lie on the Cytoplasmic side of the membrane; the sequence is TFIVPAEIFPARLRSTCH. The helical transmembrane segment at 442 to 462 threads the bilayer; the sequence is GISAATGKAGAIVGAFGFLYA. The Extracellular portion of the chain corresponds to 463 to 484; sequence AQPQDKTKTDAGYPPGIGVKNS. The helical transmembrane segment at 485-505 threads the bilayer; that stretch reads LIMLGVINFVGMLFTFLVPEP. The Cytoplasmic portion of the chain corresponds to 506–521; sequence KGKSLEELSGEAEVDK.

It belongs to the major facilitator superfamily. Phosphate:H(+) symporter (TC 2.A.1.9) family. As to expression, mainly expressed in roots, especially in the stele of the primary root, the pericycle and trichoblasts of secondary roots. To a lower extent, present in hydathodes and vascular tissues of young leaves.

The protein localises to the membrane. In terms of biological role, high-affinity transporter for external inorganic phosphate. The protein is Probable inorganic phosphate transporter 1-3 (PHT1-3) of Arabidopsis thaliana (Mouse-ear cress).